The chain runs to 337 residues: Ferrochelatase (337 aa).

2 residues coordinate Fe cation: H189 and E293.

Belongs to the ferrochelatase family.

The protein localises to the cytoplasm. It carries out the reaction heme b + 2 H(+) = protoporphyrin IX + Fe(2+). The protein operates within porphyrin-containing compound metabolism; protoheme biosynthesis; protoheme from protoporphyrin-IX: step 1/1. Functionally, catalyzes the ferrous insertion into protoporphyrin IX. This is Ferrochelatase from Pseudomonas entomophila (strain L48).